The chain runs to 47 residues: Lysis protein for colicin E9 (47 aa).

Positions 1–19 are cleaved as a signal peptide; that stretch reads MKKITGIILLLLAAIILAA. Residue Cys20 is the site of N-palmitoyl cysteine attachment. A lipid anchor (S-diacylglycerol cysteine) is attached at Cys20.

It localises to the cell outer membrane. Its function is as follows. Lysis proteins are required for both colicin release and partial cell lysis. The protein is Lysis protein for colicin E9 (lys) of Escherichia coli.